We begin with the raw amino-acid sequence, 245 residues long: 1-(5-phosphoribosyl)-5-[(5-phosphoribosylamino)methylideneamino] imidazole-4-carboxamide isomerase (245 aa).

The Proton acceptor role is filled by aspartate 7. The active-site Proton donor is aspartate 129.

The protein belongs to the HisA/HisF family.

The protein resides in the cytoplasm. The enzyme catalyses 1-(5-phospho-beta-D-ribosyl)-5-[(5-phospho-beta-D-ribosylamino)methylideneamino]imidazole-4-carboxamide = 5-[(5-phospho-1-deoxy-D-ribulos-1-ylimino)methylamino]-1-(5-phospho-beta-D-ribosyl)imidazole-4-carboxamide. Its pathway is amino-acid biosynthesis; L-histidine biosynthesis; L-histidine from 5-phospho-alpha-D-ribose 1-diphosphate: step 4/9. The chain is 1-(5-phosphoribosyl)-5-[(5-phosphoribosylamino)methylideneamino] imidazole-4-carboxamide isomerase from Escherichia coli O45:K1 (strain S88 / ExPEC).